The sequence spans 475 residues: Ribulose bisphosphate carboxylase large chain (475 aa).

Residues 1-2 (MS) constitute a propeptide that is removed on maturation. Pro-3 carries the N-acetylproline modification. The residue at position 14 (Lys-14) is an N6,N6,N6-trimethyllysine. Substrate contacts are provided by Asn-123 and Thr-173. Lys-175 functions as the Proton acceptor in the catalytic mechanism. Lys-177 is a substrate binding site. Residues Lys-201, Asp-203, and Glu-204 each coordinate Mg(2+). N6-carboxylysine is present on Lys-201. Residue His-294 is the Proton acceptor of the active site. Residues Arg-295, His-327, and Ser-379 each coordinate substrate.

This sequence belongs to the RuBisCO large chain family. Type I subfamily. In terms of assembly, heterohexadecamer of 8 large chains and 8 small chains. Mg(2+) is required as a cofactor.

It localises to the plastid. It is found in the chloroplast. It catalyses the reaction 2 (2R)-3-phosphoglycerate + 2 H(+) = D-ribulose 1,5-bisphosphate + CO2 + H2O. The enzyme catalyses D-ribulose 1,5-bisphosphate + O2 = 2-phosphoglycolate + (2R)-3-phosphoglycerate + 2 H(+). RuBisCO catalyzes two reactions: the carboxylation of D-ribulose 1,5-bisphosphate, the primary event in carbon dioxide fixation, as well as the oxidative fragmentation of the pentose substrate in the photorespiration process. Both reactions occur simultaneously and in competition at the same active site. In Huperzia lucidula (Shining clubmoss), this protein is Ribulose bisphosphate carboxylase large chain.